The following is a 77-amino-acid chain: Small ribosomal subunit protein bS18 (77 aa).

Belongs to the bacterial ribosomal protein bS18 family. As to quaternary structure, part of the 30S ribosomal subunit. Forms a tight heterodimer with protein bS6.

Its function is as follows. Binds as a heterodimer with protein bS6 to the central domain of the 16S rRNA, where it helps stabilize the platform of the 30S subunit. In Shouchella clausii (strain KSM-K16) (Alkalihalobacillus clausii), this protein is Small ribosomal subunit protein bS18.